We begin with the raw amino-acid sequence, 242 residues long: Polycomb group RING finger protein 3 (242 aa).

The segment at Cys-17–Arg-56 adopts an RING-type zinc-finger fold. Positions Glu-120–His-149 are disordered.

Component of a PRC1-like complex.

It localises to the nucleus. Its function is as follows. Component of a Polycomb group (PcG) multiprotein PRC1-like complex, a complex class required to maintain the transcriptionally repressive state of many genes, including Hox genes, throughout development. PcG PRC1 complex acts via chromatin remodeling and modification of histones; it mediates monoubiquitination of histone H2A 'Lys-119', rendering chromatin heritably changed in its expressibility. Within the PRC1-like complex, regulates RNF2 ubiquitin ligase activity. In Xenopus tropicalis (Western clawed frog), this protein is Polycomb group RING finger protein 3 (pcgf3).